Reading from the N-terminus, the 458-residue chain is UPF0210 protein MJ1665 (458 aa).

It belongs to the UPF0210 family.

The sequence is that of UPF0210 protein MJ1665 from Methanocaldococcus jannaschii (strain ATCC 43067 / DSM 2661 / JAL-1 / JCM 10045 / NBRC 100440) (Methanococcus jannaschii).